The following is a 658-amino-acid chain: Threonine--tRNA ligase (658 aa).

Residues 1 to 64 (MSCSISLSFP…GQSGQVEIIT (64 aa)) form the TGS domain. The interval 246-549 (DHRRLGREMD…LIENFAGHMP (304 aa)) is catalytic. Positions 343, 394, and 526 each coordinate Zn(2+).

The protein belongs to the class-II aminoacyl-tRNA synthetase family. In terms of assembly, homodimer. Zn(2+) is required as a cofactor.

It localises to the cytoplasm. The catalysed reaction is tRNA(Thr) + L-threonine + ATP = L-threonyl-tRNA(Thr) + AMP + diphosphate + H(+). In terms of biological role, catalyzes the attachment of threonine to tRNA(Thr) in a two-step reaction: L-threonine is first activated by ATP to form Thr-AMP and then transferred to the acceptor end of tRNA(Thr). Also edits incorrectly charged L-seryl-tRNA(Thr). In Bartonella tribocorum (strain CIP 105476 / IBS 506), this protein is Threonine--tRNA ligase.